The sequence spans 441 residues: Serine--tRNA ligase (441 aa).

An L-serine-binding site is contributed by 250-252 (TSE). Residues 281-283 (RRE) and valine 297 each bind ATP. Glutamate 304 is an L-serine binding site. 368-371 (EIVS) is an ATP binding site. Residue threonine 402 participates in L-serine binding.

Belongs to the class-II aminoacyl-tRNA synthetase family. Type-1 seryl-tRNA synthetase subfamily. Homodimer. The tRNA molecule binds across the dimer.

The protein resides in the cytoplasm. The enzyme catalyses tRNA(Ser) + L-serine + ATP = L-seryl-tRNA(Ser) + AMP + diphosphate + H(+). It catalyses the reaction tRNA(Sec) + L-serine + ATP = L-seryl-tRNA(Sec) + AMP + diphosphate + H(+). It participates in aminoacyl-tRNA biosynthesis; selenocysteinyl-tRNA(Sec) biosynthesis; L-seryl-tRNA(Sec) from L-serine and tRNA(Sec): step 1/1. Functionally, catalyzes the attachment of serine to tRNA(Ser). Is also able to aminoacylate tRNA(Sec) with serine, to form the misacylated tRNA L-seryl-tRNA(Sec), which will be further converted into selenocysteinyl-tRNA(Sec). In Thermoplasma acidophilum (strain ATCC 25905 / DSM 1728 / JCM 9062 / NBRC 15155 / AMRC-C165), this protein is Serine--tRNA ligase.